Reading from the N-terminus, the 207-residue chain is dTTP/UTP pyrophosphatase (207 aa).

Catalysis depends on Asp-80, which acts as the Proton acceptor.

Belongs to the Maf family. YhdE subfamily. A divalent metal cation is required as a cofactor.

The protein resides in the cytoplasm. The enzyme catalyses dTTP + H2O = dTMP + diphosphate + H(+). It catalyses the reaction UTP + H2O = UMP + diphosphate + H(+). In terms of biological role, nucleoside triphosphate pyrophosphatase that hydrolyzes dTTP and UTP. May have a dual role in cell division arrest and in preventing the incorporation of modified nucleotides into cellular nucleic acids. The chain is dTTP/UTP pyrophosphatase (maf1) from Agrobacterium fabrum (strain C58 / ATCC 33970) (Agrobacterium tumefaciens (strain C58)).